The sequence spans 33 residues: Vejocalcin (33 aa).

Cystine bridges form between Cys-3–Cys-17, Cys-10–Cys-21, and Cys-16–Cys-32. An essential for stimulation of [3H]ryanodine binding to RYR1 region spans residues Arg-23 to Arg-24.

Expressed by the venom gland.

The protein localises to the secreted. Its function is as follows. This toxin stabilizes ryanodine receptor 1 (RyR1) opening in a long-lasting subconductance state (60% of the full conductance state). Furthermore, it triggers calcium release from sarcoplasmic vesicles (31 nM are enough to induce a sharp release, and 65% of the total calcium is released after toxin (100 nM) addition) probably by acting as a cell-penetrating peptide (CPP). In addition, it has been shown to dose-dependently stimulate ryanodine binding to RyR1 (EC(50)=3.7 nM). It also augments the bell-shaped calcium-[3H]ryanodine binding curve that is maximal at about 10 uM calcium concentration. It binds a different site as ryanodine. It acts synergistically with caffeine. In vivo, intracerebroventricular injection into mice induces neurotoxic symptoms, followed by death. The sequence is that of Vejocalcin from Vaejovis mexicanus (Mexican scorpion).